We begin with the raw amino-acid sequence, 115 residues long: Basic leucine zipper transcriptional factor ATF-like (115 aa).

A disordered region spans residues 1 to 57 (MQQEPDRNEQGYCSSPPSSNKQDSSDDTKKIQRREKNRIAAQKSRQRQTQKADSLHI). Positions 27–90 (DTKKIQRREK…KYLTCVLSTH (64 aa)) constitute a bZIP domain. Residues 29–51 (KKIQRREKNRIAAQKSRQRQTQK) are basic motif. The tract at residues 55–83 (LHIESENLERLNSALRGEISGLREELKYL) is leucine-zipper.

The protein belongs to the bZIP family.

It localises to the nucleus. The protein localises to the cytoplasm. In terms of biological role, AP-1 family transcription factor that controls the differentiation of lineage-specific cells in the immune system: specifically mediates the differentiation of T-helper 17 cells (Th17), follicular T-helper cells (TfH), CD8(+) dendritic cells and class-switch recombination (CSR) in B-cells. The sequence is that of Basic leucine zipper transcriptional factor ATF-like (batf) from Xenopus tropicalis (Western clawed frog).